Here is a 262-residue protein sequence, read N- to C-terminus: Intron-encoded DNA endonuclease ai2b (262 aa).

Belongs to the LAGLIDADG endonuclease family.

The protein resides in the mitochondrion. In terms of biological role, mitochondrial DNA endonuclease involved in intron homing. The chain is Intron-encoded DNA endonuclease ai2b (ai2b) from Dictyostelium discoideum (Social amoeba).